We begin with the raw amino-acid sequence, 234 residues long: tRNA1(Val) (adenine(37)-N6)-methyltransferase (234 aa).

It belongs to the methyltransferase superfamily. tRNA (adenine-N(6)-)-methyltransferase family.

It localises to the cytoplasm. It carries out the reaction adenosine(37) in tRNA1(Val) + S-adenosyl-L-methionine = N(6)-methyladenosine(37) in tRNA1(Val) + S-adenosyl-L-homocysteine + H(+). In terms of biological role, specifically methylates the adenine in position 37 of tRNA(1)(Val) (anticodon cmo5UAC). The sequence is that of tRNA1(Val) (adenine(37)-N6)-methyltransferase from Aliivibrio fischeri (strain ATCC 700601 / ES114) (Vibrio fischeri).